The sequence spans 870 residues: Ribonucleoside-diphosphate reductase large subunit (870 aa).

Residues 16–110 enclose the ATP-cone domain; sequence MYVVKRDGTK…VSNLHKQTSK (95 aa). Residues 20 to 21, 26 to 32, Thr71, and Asp75 contribute to the ATP site; these read KR and ENVSFDK. Residue Ser235 participates in GDP binding. The cysteines at positions 236 and 463 are disulfide-linked. Residues 244–246, Lys261, Arg274, and 281–282 contribute to the dTTP site; these read DSI and RG. A GDP-binding site is contributed by Asn446. Asn446 acts as the Proton acceptor in catalysis. The active-site Cysteine radical intermediate is Cys448. Residues Glu450 and 632–635 each bind GDP; that span reads TAST. The active-site Proton acceptor is Glu450. Positions 789-854 are disordered; the sequence is KPVENNINST…NNNEDDLANY (66 aa). Low complexity predominate over residues 796 to 811; the sequence is NSTTPLKTPTKTPNSS. The segment covering 812-831 has biased composition (polar residues); the sequence is NRISTSPTNNLTSPIRFNIT. Residues 832–844 are compositionally biased toward low complexity; it reads QQQQQQQQQQQQQ.

The protein belongs to the ribonucleoside diphosphate reductase large chain family. Heterodimer of a large and a small subunit.

It localises to the cytoplasm. The catalysed reaction is a 2'-deoxyribonucleoside 5'-diphosphate + [thioredoxin]-disulfide + H2O = a ribonucleoside 5'-diphosphate + [thioredoxin]-dithiol. Under complex allosteric control mediated by deoxynucleoside triphosphates and ATP binding to separate specificity and activation sites on the large subunit. The type of nucleotide bound at the specificity site determines substrate preference. It seems probable that ATP makes the enzyme reduce CDP and UDP, dGTP favors ADP reduction and dTTP favors GDP reduction. Stimulated by ATP and inhibited by dATP binding to the activity site. Its function is as follows. Provides the precursors necessary for DNA synthesis. Catalyzes the biosynthesis of deoxyribonucleotides from the corresponding ribonucleotides. This Dictyostelium discoideum (Social amoeba) protein is Ribonucleoside-diphosphate reductase large subunit (rnrA).